Here is a 419-residue protein sequence, read N- to C-terminus: Copalyl diphosphate synthase 2, chloroplastic (419 aa).

Lys82 serves as a coordination point for substrate.

This sequence belongs to the terpene synthase family. Tpsc subfamily. Requires Mg(2+) as cofactor. In terms of tissue distribution, ubiquitous expression in roots, stems, leaves and flowers.

Its subcellular location is the plastid. It is found in the chloroplast. The catalysed reaction is (2E,6E,10E)-geranylgeranyl diphosphate = (+)-copalyl diphosphate. The protein operates within secondary metabolite biosynthesis; terpenoid biosynthesis. Its function is as follows. Involved in the biosynthesis of ent-kaurene diterpenoids natural products such as oridonin, miltiradiene, eriocalyxin B and nezukol, known to exhibit antitumor, anti-inflammatory and antibacterial activities. Catalyzes the conversion of (2E,6E,10E)-geranylgeranyl diphosphate (GGPP) to (+)-copalyl diphosphate ((+)-CPP). In Isodon rubescens (Rabdosia rubescens), this protein is Copalyl diphosphate synthase 2, chloroplastic.